A 49-amino-acid polypeptide reads, in one-letter code: Large ribosomal subunit protein bL33D (49 aa).

Belongs to the bacterial ribosomal protein bL33 family.

This is Large ribosomal subunit protein bL33D (rpmG4) from Enterococcus faecalis (strain ATCC 700802 / V583).